The following is a 132-amino-acid chain: MTMTDPIADMLTRLRNASAAKHETVDMPYSKFKKNIAEILKREGYIADFTAKEARVGQTLEVTLKYGPHGERSIQGIKRVSKPGLRRYAKSDALPMPLGGLGIAIISTSSGLLTQKECLDRGIGGEIVAYVW.

It belongs to the universal ribosomal protein uS8 family. As to quaternary structure, part of the 30S ribosomal subunit. Contacts proteins S5 and S12.

In terms of biological role, one of the primary rRNA binding proteins, it binds directly to 16S rRNA central domain where it helps coordinate assembly of the platform of the 30S subunit. This chain is Small ribosomal subunit protein uS8, found in Bifidobacterium animalis subsp. lactis (strain AD011).